Consider the following 174-residue polypeptide: Large ribosomal subunit protein uL10 (174 aa).

The protein belongs to the universal ribosomal protein uL10 family. As to quaternary structure, part of the ribosomal stalk of the 50S ribosomal subunit. The N-terminus interacts with L11 and the large rRNA to form the base of the stalk. The C-terminus forms an elongated spine to which L12 dimers bind in a sequential fashion forming a multimeric L10(L12)X complex.

Its function is as follows. Forms part of the ribosomal stalk, playing a central role in the interaction of the ribosome with GTP-bound translation factors. The sequence is that of Large ribosomal subunit protein uL10 from Pelobacter propionicus (strain DSM 2379 / NBRC 103807 / OttBd1).